The primary structure comprises 388 residues: Ferrochelatase (388 aa).

The Fe cation site is built by histidine 196 and glutamate 277.

The protein belongs to the ferrochelatase family.

It is found in the cytoplasm. The enzyme catalyses heme b + 2 H(+) = protoporphyrin IX + Fe(2+). The protein operates within porphyrin-containing compound metabolism; protoheme biosynthesis; protoheme from protoporphyrin-IX: step 1/1. In terms of biological role, catalyzes the ferrous insertion into protoporphyrin IX. The protein is Ferrochelatase of Trichormus variabilis (strain ATCC 29413 / PCC 7937) (Anabaena variabilis).